Reading from the N-terminus, the 223-residue chain is dITP/XTP pyrophosphatase (223 aa).

9–14 (TTNQNK) is a binding site for substrate. D71 (proton acceptor) is an active-site residue. Residue D71 participates in Mg(2+) binding. Substrate is bound by residues S72, 152–155 (FGYD), K175, and 180–181 (HR). A disordered region spans residues 203–223 (LSEEKPAKPDHSEFEGNDWSK).

It belongs to the HAM1 NTPase family. Homodimer. Mg(2+) is required as a cofactor.

It carries out the reaction XTP + H2O = XMP + diphosphate + H(+). The catalysed reaction is dITP + H2O = dIMP + diphosphate + H(+). The enzyme catalyses ITP + H2O = IMP + diphosphate + H(+). Pyrophosphatase that catalyzes the hydrolysis of nucleoside triphosphates to their monophosphate derivatives, with a high preference for the non-canonical purine nucleotides XTP (xanthosine triphosphate), dITP (deoxyinosine triphosphate) and ITP. Seems to function as a house-cleaning enzyme that removes non-canonical purine nucleotides from the nucleotide pool, thus preventing their incorporation into DNA/RNA and avoiding chromosomal lesions. The chain is dITP/XTP pyrophosphatase from Desulfotalea psychrophila (strain LSv54 / DSM 12343).